We begin with the raw amino-acid sequence, 158 residues long: 3-hydroxyacyl-[acyl-carrier-protein] dehydratase FabZ (158 aa).

His-61 is an active-site residue.

The protein belongs to the thioester dehydratase family. FabZ subfamily.

It localises to the cytoplasm. It catalyses the reaction a (3R)-hydroxyacyl-[ACP] = a (2E)-enoyl-[ACP] + H2O. Involved in unsaturated fatty acids biosynthesis. Catalyzes the dehydration of short chain beta-hydroxyacyl-ACPs and long chain saturated and unsaturated beta-hydroxyacyl-ACPs. This Methylobacterium radiotolerans (strain ATCC 27329 / DSM 1819 / JCM 2831 / NBRC 15690 / NCIMB 10815 / 0-1) protein is 3-hydroxyacyl-[acyl-carrier-protein] dehydratase FabZ.